Here is a 432-residue protein sequence, read N- to C-terminus: Tol-Pal system protein TolB (432 aa).

An N-terminal signal peptide occupies residues 1–21 (MKHVRIFATLLALLVISVTPA).

The protein belongs to the TolB family. As to quaternary structure, the Tol-Pal system is composed of five core proteins: the inner membrane proteins TolA, TolQ and TolR, the periplasmic protein TolB and the outer membrane protein Pal. They form a network linking the inner and outer membranes and the peptidoglycan layer.

The protein localises to the periplasm. Functionally, part of the Tol-Pal system, which plays a role in outer membrane invagination during cell division and is important for maintaining outer membrane integrity. The polypeptide is Tol-Pal system protein TolB (Geobacter sulfurreducens (strain ATCC 51573 / DSM 12127 / PCA)).